A 334-amino-acid chain; its full sequence is Phosphate acyltransferase (334 aa).

The protein belongs to the PlsX family. As to quaternary structure, homodimer. Probably interacts with PlsY.

It localises to the cytoplasm. It carries out the reaction a fatty acyl-[ACP] + phosphate = an acyl phosphate + holo-[ACP]. It functions in the pathway lipid metabolism; phospholipid metabolism. In terms of biological role, catalyzes the reversible formation of acyl-phosphate (acyl-PO(4)) from acyl-[acyl-carrier-protein] (acyl-ACP). This enzyme utilizes acyl-ACP as fatty acyl donor, but not acyl-CoA. This chain is Phosphate acyltransferase, found in Streptococcus thermophilus (strain ATCC BAA-491 / LMD-9).